Reading from the N-terminus, the 89-residue chain is Small ribosomal subunit protein uS15 (89 aa).

It belongs to the universal ribosomal protein uS15 family. As to quaternary structure, part of the 30S ribosomal subunit. Forms a bridge to the 50S subunit in the 70S ribosome, contacting the 23S rRNA.

One of the primary rRNA binding proteins, it binds directly to 16S rRNA where it helps nucleate assembly of the platform of the 30S subunit by binding and bridging several RNA helices of the 16S rRNA. Its function is as follows. Forms an intersubunit bridge (bridge B4) with the 23S rRNA of the 50S subunit in the ribosome. The protein is Small ribosomal subunit protein uS15 of Listeria innocua serovar 6a (strain ATCC BAA-680 / CLIP 11262).